The sequence spans 174 residues: Ribosome maturation factor RimM (174 aa).

Residues 98–171 (EGEFYFHQII…TIHIEVMEGL (74 aa)) enclose the PRC barrel domain.

The protein belongs to the RimM family. Binds ribosomal protein uS19.

The protein resides in the cytoplasm. An accessory protein needed during the final step in the assembly of 30S ribosomal subunit, possibly for assembly of the head region. Essential for efficient processing of 16S rRNA. May be needed both before and after RbfA during the maturation of 16S rRNA. It has affinity for free ribosomal 30S subunits but not for 70S ribosomes. The protein is Ribosome maturation factor RimM of Bacillus pumilus (strain SAFR-032).